Reading from the N-terminus, the 449-residue chain is Bifunctional protein GlmU (449 aa).

The segment at Met1–Arg228 is pyrophosphorylase. UDP-N-acetyl-alpha-D-glucosamine is bound by residues Leu8–Gly11, Lys22, Gln75, Gly80–Thr81, Tyr103–Asp105, Gly140, Glu154, Asn169, and Asn226. Residue Asp105 coordinates Mg(2+). Asn226 serves as a coordination point for Mg(2+). Positions Ala229 to Ile249 are linker. Residues Gly250–Gly449 are N-acetyltransferase. Positions 315 and 333 each coordinate UDP-N-acetyl-alpha-D-glucosamine. Residue His345 is the Proton acceptor of the active site. Tyr348 and Asn359 together coordinate UDP-N-acetyl-alpha-D-glucosamine. Acetyl-CoA-binding positions include Ala362, Asn368–Tyr369, Ser387, Thr405, and Arg422.

It in the N-terminal section; belongs to the N-acetylglucosamine-1-phosphate uridyltransferase family. The protein in the C-terminal section; belongs to the transferase hexapeptide repeat family. In terms of assembly, homotrimer. It depends on Mg(2+) as a cofactor.

It localises to the cytoplasm. It carries out the reaction alpha-D-glucosamine 1-phosphate + acetyl-CoA = N-acetyl-alpha-D-glucosamine 1-phosphate + CoA + H(+). The catalysed reaction is N-acetyl-alpha-D-glucosamine 1-phosphate + UTP + H(+) = UDP-N-acetyl-alpha-D-glucosamine + diphosphate. It functions in the pathway nucleotide-sugar biosynthesis; UDP-N-acetyl-alpha-D-glucosamine biosynthesis; N-acetyl-alpha-D-glucosamine 1-phosphate from alpha-D-glucosamine 6-phosphate (route II): step 2/2. The protein operates within nucleotide-sugar biosynthesis; UDP-N-acetyl-alpha-D-glucosamine biosynthesis; UDP-N-acetyl-alpha-D-glucosamine from N-acetyl-alpha-D-glucosamine 1-phosphate: step 1/1. It participates in bacterial outer membrane biogenesis; LPS lipid A biosynthesis. Its function is as follows. Catalyzes the last two sequential reactions in the de novo biosynthetic pathway for UDP-N-acetylglucosamine (UDP-GlcNAc). The C-terminal domain catalyzes the transfer of acetyl group from acetyl coenzyme A to glucosamine-1-phosphate (GlcN-1-P) to produce N-acetylglucosamine-1-phosphate (GlcNAc-1-P), which is converted into UDP-GlcNAc by the transfer of uridine 5-monophosphate (from uridine 5-triphosphate), a reaction catalyzed by the N-terminal domain. In Ruegeria sp. (strain TM1040) (Silicibacter sp.), this protein is Bifunctional protein GlmU.